A 475-amino-acid chain; its full sequence is Tubulin gamma chain (475 aa).

A GTP-binding site is contributed by 142-148; sequence AGGTGSG. The tract at residues 455–475 is disordered; the sequence is GKQVSGEGNTSGTVDSRVGAS.

It belongs to the tubulin family.

Its subcellular location is the cytoplasm. The protein resides in the cytoskeleton. It localises to the microtubule organizing center. Tubulin is the major constituent of microtubules. The gamma chain is found at microtubule organizing centers (MTOC) such as the spindle poles, suggesting that it is involved in the minus-end nucleation of microtubule assembly. The sequence is that of Tubulin gamma chain (TUBG1) from Physcomitrium patens (Spreading-leaved earth moss).